The chain runs to 292 residues: Protease HtpX homolog (292 aa).

Helical transmembrane passes span 4-24 (IFLF…TLRL) and 42-62 (ALLV…LAMS). Histidine 147 contacts Zn(2+). Glutamate 148 is a catalytic residue. Histidine 151 is a Zn(2+) binding site. 2 helical membrane passes run 158-178 (VTLA…SRII) and 198-218 (FVTS…IVMW). Residue glutamate 224 coordinates Zn(2+).

Belongs to the peptidase M48B family. Requires Zn(2+) as cofactor.

The protein localises to the cell inner membrane. This Nitrosomonas eutropha (strain DSM 101675 / C91 / Nm57) protein is Protease HtpX homolog.